Consider the following 219-residue polypeptide: Small ribosomal subunit protein eS1 (219 aa).

The protein belongs to the eukaryotic ribosomal protein eS1 family. As to quaternary structure, component of the small ribosomal subunit. Mature ribosomes consist of a small (40S) and a large (60S) subunit. The 40S subunit contains about 33 different proteins and 1 molecule of RNA (18S). The 60S subunit contains about 49 different proteins and 3 molecules of RNA (25S, 5.8S and 5S).

It localises to the cytoplasm. The polypeptide is Small ribosomal subunit protein eS1 (Guillardia theta (Cryptophyte)).